The sequence spans 158 residues: 6,7-dimethyl-8-ribityllumazine synthase (158 aa).

5-amino-6-(D-ribitylamino)uracil-binding positions include phenylalanine 24, 58–60 (AFE), and 82–84 (AVI). (2S)-2-hydroxy-3-oxobutyl phosphate is bound at residue 87–88 (GT). The active-site Proton donor is histidine 90. Phenylalanine 115 contributes to the 5-amino-6-(D-ribitylamino)uracil binding site. Arginine 129 contributes to the (2S)-2-hydroxy-3-oxobutyl phosphate binding site.

The protein belongs to the DMRL synthase family. Forms an icosahedral capsid composed of 60 subunits, arranged as a dodecamer of pentamers.

The catalysed reaction is (2S)-2-hydroxy-3-oxobutyl phosphate + 5-amino-6-(D-ribitylamino)uracil = 6,7-dimethyl-8-(1-D-ribityl)lumazine + phosphate + 2 H2O + H(+). It participates in cofactor biosynthesis; riboflavin biosynthesis; riboflavin from 2-hydroxy-3-oxobutyl phosphate and 5-amino-6-(D-ribitylamino)uracil: step 1/2. Functionally, catalyzes the formation of 6,7-dimethyl-8-ribityllumazine by condensation of 5-amino-6-(D-ribitylamino)uracil with 3,4-dihydroxy-2-butanone 4-phosphate. This is the penultimate step in the biosynthesis of riboflavin. The protein is 6,7-dimethyl-8-ribityllumazine synthase of Pseudomonas putida (strain GB-1).